Here is a 359-residue protein sequence, read N- to C-terminus: Probable E3 ubiquitin-protein ligase LUL4 (359 aa).

Residues Met-1–Pro-35 are disordered. A lipid anchor (N-myristoyl glycine) is attached at Gly-2. The segment covering Tyr-23–Pro-35 has biased composition (pro residues). Positions Phe-148–Gln-267 are DAR2 domain. The RING-type zinc-finger motif lies at Cys-302–Arg-341.

This sequence belongs to the RING-type zinc finger family. LOG2 subfamily.

It catalyses the reaction S-ubiquitinyl-[E2 ubiquitin-conjugating enzyme]-L-cysteine + [acceptor protein]-L-lysine = [E2 ubiquitin-conjugating enzyme]-L-cysteine + N(6)-ubiquitinyl-[acceptor protein]-L-lysine.. The protein operates within protein modification; protein ubiquitination. Acts as an E3 ubiquitin-protein ligase, or as part of E3 complex, which accepts ubiquitin from specific E2 ubiquitin-conjugating enzymes and then transfers it to substrates (in vitro). In Arabidopsis thaliana (Mouse-ear cress), this protein is Probable E3 ubiquitin-protein ligase LUL4 (LUL4).